The chain runs to 141 residues: Large ribosomal subunit protein uL11B (141 aa).

This sequence belongs to the universal ribosomal protein uL11 family. In terms of assembly, part of the ribosomal stalk of the 50S ribosomal subunit. Interacts with L10 and the large rRNA to form the base of the stalk. L10 forms an elongated spine to which L12 dimers bind in a sequential fashion forming a multimeric L10(L12)X complex. One or more lysine residues are methylated.

Forms part of the ribosomal stalk which helps the ribosome interact with GTP-bound translation factors. The chain is Large ribosomal subunit protein uL11B from Halalkalibacterium halodurans (strain ATCC BAA-125 / DSM 18197 / FERM 7344 / JCM 9153 / C-125) (Bacillus halodurans).